The chain runs to 257 residues: Phosphate import ATP-binding protein PstB (257 aa).

Positions 11 to 252 (LEVRDLNFFY…PQKKATEDYI (242 aa)) constitute an ABC transporter domain. 43–50 (GPSGCGKS) is an ATP binding site.

The protein belongs to the ABC transporter superfamily. Phosphate importer (TC 3.A.1.7) family. The complex is composed of two ATP-binding proteins (PstB), two transmembrane proteins (PstC and PstA) and a solute-binding protein (PstS).

It is found in the cell inner membrane. It catalyses the reaction phosphate(out) + ATP + H2O = ADP + 2 phosphate(in) + H(+). Functionally, part of the ABC transporter complex PstSACB involved in phosphate import. Responsible for energy coupling to the transport system. The protein is Phosphate import ATP-binding protein PstB of Chromobacterium violaceum (strain ATCC 12472 / DSM 30191 / JCM 1249 / CCUG 213 / NBRC 12614 / NCIMB 9131 / NCTC 9757 / MK).